Reading from the N-terminus, the 222-residue chain is uncharacterized protein (222 aa).

Residues M1–A27 constitute a signal peptide (tat-type signal). 4Fe-4S ferredoxin-type domains lie at Y37–S67, T83–Q114, and G115–V144. Positions 46, 49, 52, 56, 92, 95, 100, 104, 124, 127, 130, 134, 151, 154, 167, and 171 each coordinate [4Fe-4S] cluster.

Post-translationally, exported by the Tat system. The position of the signal peptide cleavage has not been experimentally proven. Can also be exported by the Sec system.

This is an uncharacterized protein from Escherichia coli (strain K12).